Reading from the N-terminus, the 588-residue chain is Aspartate--tRNA ligase (588 aa).

Glu-174 serves as a coordination point for L-aspartate. The tract at residues 198-201 (QLFK) is aspartate. Arg-220 is an L-aspartate binding site. ATP is bound by residues 220–222 (RDE) and Gln-229. His-448 provides a ligand contact to L-aspartate. ATP is bound at residue Glu-482. Residue Arg-489 participates in L-aspartate binding. 534–537 (GIDR) is an ATP binding site.

The protein belongs to the class-II aminoacyl-tRNA synthetase family. Type 1 subfamily. Homodimer.

It is found in the cytoplasm. The catalysed reaction is tRNA(Asp) + L-aspartate + ATP = L-aspartyl-tRNA(Asp) + AMP + diphosphate. Functionally, catalyzes the attachment of L-aspartate to tRNA(Asp) in a two-step reaction: L-aspartate is first activated by ATP to form Asp-AMP and then transferred to the acceptor end of tRNA(Asp). The chain is Aspartate--tRNA ligase from Xanthomonas oryzae pv. oryzae (strain MAFF 311018).